Here is a 158-residue protein sequence, read N- to C-terminus: Transcription elongation factor GreA (158 aa).

Residues 24–43 (DVERPKASEAIGEARDKGDL) are compositionally biased toward basic and acidic residues. The tract at residues 24 to 47 (DVERPKASEAIGEARDKGDLSENA) is disordered. The stretch at 48 to 68 (EYDAAKEAQGLLEMKISKMEE) forms a coiled coil.

It belongs to the GreA/GreB family.

Necessary for efficient RNA polymerase transcription elongation past template-encoded arresting sites. The arresting sites in DNA have the property of trapping a certain fraction of elongating RNA polymerases that pass through, resulting in locked ternary complexes. Cleavage of the nascent transcript by cleavage factors such as GreA or GreB allows the resumption of elongation from the new 3'terminus. GreA releases sequences of 2 to 3 nucleotides. This is Transcription elongation factor GreA from Christiangramia forsetii (strain DSM 17595 / CGMCC 1.15422 / KT0803) (Gramella forsetii).